Here is a 234-residue protein sequence, read N- to C-terminus: Probable transcriptional regulatory protein Pfl01_3677 (234 aa).

The protein belongs to the TACO1 family.

Its subcellular location is the cytoplasm. The sequence is that of Probable transcriptional regulatory protein Pfl01_3677 from Pseudomonas fluorescens (strain Pf0-1).